A 179-amino-acid polypeptide reads, in one-letter code: Apolipophorin-3b (179 aa).

Positions 1–16 are cleaved as a signal peptide; it reads MNTLLAVLMLAVAAQA. 12 consecutive repeats follow at residues 30–40, 41–52, 53–60, 61–78, 79–89, 90–99, 100–113, 114–127, 128–140, 141–151, 152–165, and 166–179; these read VQQLNHTIVNA, AHELHETLGLPT, PDEALNLL, TEQA…TTSL, KQEAEKHQGSV, AEQLNRFARN, LNNS…SAQP, ADQL…LTNV, GHQW…RPSV, AQEAWAPVQSA, LQEA…AAAN, and LQNS…KPAN. N34 carries N-linked (GlcNAc...) asparagine glycosylation. N101 is a glycosylation site (N-linked (GlcNAc...) asparagine). The disordered stretch occupies residues 152-179; it reads LQEAAEKTKEAAANLQNSIQSAVQKPAN. Over residues 165–179 the composition is skewed to polar residues; it reads NLQNSIQSAVQKPAN.

Belongs to the insect apolipophorin-3 family. In terms of assembly, equilibrium between a soluble monomer and a bound lipoprotein form. Apolipophorin-3 associates with lipophorin during lipid loading until each particle contains 14 molecules of apolipophorin-3 in L.migratoria (5 molecules of apolipophorin-3a and 9 of apolipophorin-3b). As to expression, hemolymph.

The protein resides in the secreted. Assists in the loading of diacylglycerol, generated from triacylglycerol stores in the fat body through the action of adipokinetic hormone, into lipophorin, the hemolymph lipoprotein. It increases the lipid carrying capacity of lipophorin by covering the expanding hydrophobic surface resulting from diacylglycerol uptake. It thus plays a critical role in the transport of lipids during flight in several species of insects. In Locusta migratoria (Migratory locust), this protein is Apolipophorin-3b.